The chain runs to 147 residues: Holdfast attachment protein A (147 aa).

Functionally, involved in attachment of the holdfast to the cell. The holdfast is a structure that allows the bacteria to firmly adheres to surfaces. This chain is Holdfast attachment protein A (hfaA), found in Caulobacter vibrioides (strain ATCC 19089 / CIP 103742 / CB 15) (Caulobacter crescentus).